Reading from the N-terminus, the 666-residue chain is uncharacterized protein (666 aa).

It belongs to the MG032/MG096/MG288 family.

This is an uncharacterized protein from Mycoplasma genitalium (strain ATCC 33530 / DSM 19775 / NCTC 10195 / G37) (Mycoplasmoides genitalium).